The primary structure comprises 401 residues: All trans-polyprenyl-diphosphate synthase PDSS2 (401 aa).

It belongs to the FPP/GGPP synthase family. As to quaternary structure, heterotetramer composed of 2 PDSS1/DPS1 and 2 PDSS2/DLP1 subunits.

Its subcellular location is the mitochondrion. It carries out the reaction 7 isopentenyl diphosphate + (2E,6E)-farnesyl diphosphate = all-trans-decaprenyl diphosphate + 7 diphosphate. It catalyses the reaction 6 isopentenyl diphosphate + (2E,6E)-farnesyl diphosphate = all-trans-nonaprenyl diphosphate + 6 diphosphate. It functions in the pathway cofactor biosynthesis; ubiquinone biosynthesis. In terms of biological role, heterotetrameric enzyme that catalyzes the condensation of farnesyl diphosphate (FPP), which acts as a primer, and isopentenyl diphosphate (IPP) to produce prenyl diphosphates of varying chain lengths and participates in the determination of the side chain of ubiquinone. Supplies nona and decaprenyl diphosphate, the precursors for the side chain of the isoprenoid quinones ubiquinone-9 (Q9) and ubiquinone-10 (Q10) respectively. The enzyme adds isopentenyl diphosphate molecules sequentially to farnesyl diphosphate with trans stereochemistry. May play a role during cerebellar development. May regulate mitochondrial respiratory chain function. This is All trans-polyprenyl-diphosphate synthase PDSS2 from Rattus norvegicus (Rat).